The following is a 247-amino-acid chain: ATP synthase subunit a, chloroplastic (247 aa).

Transmembrane regions (helical) follow at residues glutamine 38–valine 58, valine 95–leucine 115, isoleucine 134–serine 154, leucine 199–leucine 219, and glycine 220–glycine 240.

This sequence belongs to the ATPase A chain family. F-type ATPases have 2 components, CF(1) - the catalytic core - and CF(0) - the membrane proton channel. CF(1) has five subunits: alpha(3), beta(3), gamma(1), delta(1), epsilon(1). CF(0) has four main subunits: a, b, b' and c.

It is found in the plastid. The protein resides in the chloroplast thylakoid membrane. Functionally, key component of the proton channel; it plays a direct role in the translocation of protons across the membrane. This is ATP synthase subunit a, chloroplastic from Cicer arietinum (Chickpea).